The sequence spans 347 residues: MSATSIQPLLDILFQGKALTREQTASLFSTLIQGEMNEAVMAGMLMALKIRGETIAEISGAADAMRAAAKPFPYPSSMRTEGIIDIVGTGGDGFNTINISTTAAFVAAAAGAKVAKHGNRSVSSKSGSSDLLAQFGIDLTMSPELASRCLESLNLCFLFAPHYHGGVKHAVPVRQALKTRTIFNVLGPLINPARPEFMLLGVYSPELVTPIARVLQALGTQRAMVVHGSGLDEVALHGSTQVAELKDGEIIEYQLTPADFGVPQAQMSELEGGEPAQNAQITQSILQGQGSDAHTHAVAINAGCALYLCGLSDSVKAGTALALNTIKSGKAFELLNQLAKVSSEAQE.

5-phospho-alpha-D-ribose 1-diphosphate is bound by residues glycine 88, 91–92 (GD), threonine 96, 98–101 (NIST), 116–124 (KHGNRSVSS), and serine 128. Residue glycine 88 coordinates anthranilate. Mg(2+) is bound at residue serine 100. Residue asparagine 119 participates in anthranilate binding. Arginine 174 is a binding site for anthranilate. Mg(2+) is bound by residues aspartate 232 and glutamate 233.

It belongs to the anthranilate phosphoribosyltransferase family. As to quaternary structure, homodimer. Mg(2+) serves as cofactor.

The enzyme catalyses N-(5-phospho-beta-D-ribosyl)anthranilate + diphosphate = 5-phospho-alpha-D-ribose 1-diphosphate + anthranilate. It participates in amino-acid biosynthesis; L-tryptophan biosynthesis; L-tryptophan from chorismate: step 2/5. In terms of biological role, catalyzes the transfer of the phosphoribosyl group of 5-phosphorylribose-1-pyrophosphate (PRPP) to anthranilate to yield N-(5'-phosphoribosyl)-anthranilate (PRA). The sequence is that of Anthranilate phosphoribosyltransferase from Shewanella sp. (strain MR-4).